A 253-amino-acid polypeptide reads, in one-letter code: 5'-nucleotidase SurE (253 aa).

Residues aspartate 8, aspartate 9, serine 39, and asparagine 92 each coordinate a divalent metal cation.

Belongs to the SurE nucleotidase family. Requires a divalent metal cation as cofactor.

It localises to the cytoplasm. The enzyme catalyses a ribonucleoside 5'-phosphate + H2O = a ribonucleoside + phosphate. In terms of biological role, nucleotidase that shows phosphatase activity on nucleoside 5'-monophosphates. The sequence is that of 5'-nucleotidase SurE from Burkholderia pseudomallei (strain 1710b).